Here is a 125-residue protein sequence, read N- to C-terminus: uncharacterized protein (125 aa).

The HTH cro/C1-type domain occupies 19–73 (IYSLRLAKGLSRQQLAEVIDVTHQQLQKYEKAINRISVGRLVLIAEALDRNIDYF). Positions 30–49 (RQQLAEVIDVTHQQLQKYEK) form a DNA-binding region, H-T-H motif.

This is an uncharacterized protein from Rickettsia conorii (strain ATCC VR-613 / Malish 7).